Reading from the N-terminus, the 340-residue chain is Phospho-N-acetylmuramoyl-pentapeptide-transferase (340 aa).

Transmembrane regions (helical) follow at residues 5–25 (FILSFFTSLLLMLIFGPHLIN), 50–70 (TPTMGGILIIFSIIISTIIWT), 73–93 (SNPYVWLTLTILIGYGIIGFI), 113–133 (FSLLSILACIIIFLIYYIIND), 147–167 (IIFNTKMICILISYFAIIGTS), 178–198 (GLAIVPIIFVTTNLSIISFIS), 218–238 (LTIICAAIIGSSLGFLWFNTY), 242–262 (IFMGDVGSLSLGGTIGIISVL), 267–287 (ILLIIVGGLFVIETLSVIIQV), and 318–338 (IIRFWIISFILMLLGLLMLKV).

This sequence belongs to the glycosyltransferase 4 family. MraY subfamily. Requires Mg(2+) as cofactor.

The protein resides in the cell membrane. The enzyme catalyses UDP-N-acetyl-alpha-D-muramoyl-L-alanyl-gamma-D-glutamyl-meso-2,6-diaminopimeloyl-D-alanyl-D-alanine + di-trans,octa-cis-undecaprenyl phosphate = di-trans,octa-cis-undecaprenyl diphospho-N-acetyl-alpha-D-muramoyl-L-alanyl-D-glutamyl-meso-2,6-diaminopimeloyl-D-alanyl-D-alanine + UMP. The protein operates within cell wall biogenesis; peptidoglycan biosynthesis. Its function is as follows. Catalyzes the initial step of the lipid cycle reactions in the biosynthesis of the cell wall peptidoglycan: transfers peptidoglycan precursor phospho-MurNAc-pentapeptide from UDP-MurNAc-pentapeptide onto the lipid carrier undecaprenyl phosphate, yielding undecaprenyl-pyrophosphoryl-MurNAc-pentapeptide, known as lipid I. This chain is Phospho-N-acetylmuramoyl-pentapeptide-transferase, found in Buchnera aphidicola subsp. Baizongia pistaciae (strain Bp).